The following is a 348-amino-acid chain: Methylthioribose-1-phosphate isomerase (348 aa).

Substrate is bound by residues 54–56 (RGA), Arg96, and Gln199. The active-site Proton donor is Asp240. A substrate-binding site is contributed by 250-251 (NK).

This sequence belongs to the eIF-2B alpha/beta/delta subunits family. MtnA subfamily.

The enzyme catalyses 5-(methylsulfanyl)-alpha-D-ribose 1-phosphate = 5-(methylsulfanyl)-D-ribulose 1-phosphate. The protein operates within amino-acid biosynthesis; L-methionine biosynthesis via salvage pathway; L-methionine from S-methyl-5-thio-alpha-D-ribose 1-phosphate: step 1/6. In terms of biological role, catalyzes the interconversion of methylthioribose-1-phosphate (MTR-1-P) into methylthioribulose-1-phosphate (MTRu-1-P). The polypeptide is Methylthioribose-1-phosphate isomerase (Thioalkalivibrio sulfidiphilus (strain HL-EbGR7)).